A 138-amino-acid chain; its full sequence is Cysteine desulfuration protein SufE (138 aa).

Cys51 (cysteine persulfide intermediate) is an active-site residue.

It belongs to the SufE family. Homodimer. Interacts with SufS.

The protein resides in the cytoplasm. Its pathway is cofactor biosynthesis; iron-sulfur cluster biosynthesis. In terms of biological role, participates in cysteine desulfuration mediated by SufS. Cysteine desulfuration mobilizes sulfur from L-cysteine to yield L-alanine and constitutes an essential step in sulfur metabolism for biosynthesis of a variety of sulfur-containing biomolecules. Functions as a sulfur acceptor for SufS, by mediating the direct transfer of the sulfur atom from the S-sulfanylcysteine of SufS, an intermediate product of cysteine desulfuration process. The sequence is that of Cysteine desulfuration protein SufE from Escherichia coli O81 (strain ED1a).